The chain runs to 55 residues: MAKGAESIYRYYEIKGEKVVRKKKFCPRCGEGVFLAEHKDRLSCGKCGYTEFKKK.

Zn(2+) contacts are provided by Cys-26, Cys-29, Cys-44, and Cys-47.

This sequence belongs to the eukaryotic ribosomal protein eS31 family. As to quaternary structure, part of the 30S ribosomal subunit. Requires Zn(2+) as cofactor.

The chain is Small ribosomal subunit protein eS31 from Archaeoglobus fulgidus (strain ATCC 49558 / DSM 4304 / JCM 9628 / NBRC 100126 / VC-16).